The sequence spans 175 residues: DM domain-containing protein mab-23 (175 aa).

The segment at residues 8–56 (CQLCANHGIFNQPKKGHKQKCPYRTCPCSLCALNTKRRALDQIERQLKH) is a DNA-binding region (DM). A disordered region spans residues 58–93 (NEPMTGQTATSMASPTPECPLSPTTPKMTPHTPTSG). The span at 59–71 (EPMTGQTATSMAS) shows a compositional bias: polar residues. Low complexity predominate over residues 81–91 (TTPKMTPHTPT).

Expressed in a limited number of non-sex-specific tissues in males, including 6-8 unidentified neurons of the head, ventral body wall muscle, and the PHCL/R neurons.

It is found in the nucleus. Functionally, probable transcription factor that plays a role in the development of the dopaminergic neurons of the male-specific genital sensilla (simple sense organs) known as rays, by negatively regulating the activity of the transcription factor ast-1. Involved in male mating behavior, probably as a result of a role in the differentiation of male-specific diagonal muscles. Required for development of the male proctodeum. May be dispensable in hermaphrodites. The chain is DM domain-containing protein mab-23 from Caenorhabditis elegans.